Consider the following 294-residue polypeptide: Nucleoside-specific channel-forming protein Tsx (294 aa).

Positions 1–22 (MKKTLLAASAVVALSASFTAGA) are cleaved as a signal peptide.

The protein belongs to the nucleoside-specific channel-forming outer membrane porin (Tsx) (TC 1.B.10) family.

It is found in the cell outer membrane. Functionally, functions as a substrate-specific channel for nucleosides and deoxynucleosides. Also functions in albicidin uptake and as receptor for colicin K. Also is a receptor for several Tsx-specific bacteriophages. The chain is Nucleoside-specific channel-forming protein Tsx from Klebsiella aerogenes (strain ATCC 13048 / DSM 30053 / CCUG 1429 / JCM 1235 / KCTC 2190 / NBRC 13534 / NCIMB 10102 / NCTC 10006 / CDC 819-56) (Enterobacter aerogenes).